The primary structure comprises 340 residues: Glycerol-3-phosphate dehydrogenase [NAD(P)+] (340 aa).

NADPH is bound by residues Ser-14, Phe-15, Arg-35, and Lys-108. Sn-glycerol 3-phosphate contacts are provided by Lys-108 and Gly-136. Ala-140 contributes to the NADPH binding site. Positions 191, 244, 254, 255, and 256 each coordinate sn-glycerol 3-phosphate. The Proton acceptor role is filled by Lys-191. Residue Arg-255 coordinates NADPH. Residue Glu-281 participates in NADPH binding.

It belongs to the NAD-dependent glycerol-3-phosphate dehydrogenase family.

Its subcellular location is the cytoplasm. It catalyses the reaction sn-glycerol 3-phosphate + NAD(+) = dihydroxyacetone phosphate + NADH + H(+). The catalysed reaction is sn-glycerol 3-phosphate + NADP(+) = dihydroxyacetone phosphate + NADPH + H(+). It functions in the pathway membrane lipid metabolism; glycerophospholipid metabolism. In terms of biological role, catalyzes the reduction of the glycolytic intermediate dihydroxyacetone phosphate (DHAP) to sn-glycerol 3-phosphate (G3P), the key precursor for phospholipid synthesis. The polypeptide is Glycerol-3-phosphate dehydrogenase [NAD(P)+] (Pseudomonas aeruginosa (strain LESB58)).